We begin with the raw amino-acid sequence, 136 residues long: Prefoldin subunit alpha (136 aa).

It belongs to the prefoldin subunit alpha family. As to quaternary structure, heterohexamer of two alpha and four beta subunits.

It localises to the cytoplasm. Its function is as follows. Molecular chaperone capable of stabilizing a range of proteins. Seems to fulfill an ATP-independent, HSP70-like function in archaeal de novo protein folding. The polypeptide is Prefoldin subunit alpha (Pyrobaculum arsenaticum (strain DSM 13514 / JCM 11321 / PZ6)).